A 148-amino-acid chain; its full sequence is 18 kDa antigen (148 aa).

In terms of domain architecture, sHSP spans 21-131 (TSARPAVMPM…KPRKISVDRG (111 aa)).

It belongs to the small heat shock protein (HSP20) family.

In terms of biological role, not known. This protein is one of the major immune reactive proteins in mycobacteria. This is 18 kDa antigen (hsp18) from Mycobacterium leprae (strain TN).